The primary structure comprises 344 residues: Protein RecA (344 aa).

64-71 (GPESSGKT) lines the ATP pocket.

The protein belongs to the RecA family.

The protein resides in the cytoplasm. Functionally, can catalyze the hydrolysis of ATP in the presence of single-stranded DNA, the ATP-dependent uptake of single-stranded DNA by duplex DNA, and the ATP-dependent hybridization of homologous single-stranded DNAs. It interacts with LexA causing its activation and leading to its autocatalytic cleavage. This Paramagnetospirillum magnetotacticum (Aquaspirillum magnetotacticum) protein is Protein RecA.